The primary structure comprises 180 residues: Alkyl hydroperoxide reductase AhpD (180 aa).

Cys131 (proton donor) is an active-site residue. Cys131 and Cys134 are joined by a disulfide. The active-site Cysteine sulfenic acid (-SOH) intermediate is the Cys134.

The protein belongs to the AhpD family.

The enzyme catalyses N(6)-[(R)-dihydrolipoyl]-L-lysyl-[lipoyl-carrier protein] + a hydroperoxide = N(6)-[(R)-lipoyl]-L-lysyl-[lipoyl-carrier protein] + an alcohol + H2O. Antioxidant protein with alkyl hydroperoxidase activity. Required for the reduction of the AhpC active site cysteine residues and for the regeneration of the AhpC enzyme activity. The polypeptide is Alkyl hydroperoxide reductase AhpD (Beijerinckia indica subsp. indica (strain ATCC 9039 / DSM 1715 / NCIMB 8712)).